The primary structure comprises 310 residues: Membrane protein insertase YidC 2 (310 aa).

Residues 1 to 23 (MKKTLKRILFSSLSLSILLLLTG) form the signal peptide. Cys-24 carries the N-palmitoyl cysteine lipid modification. Residue Cys-24 is the site of S-diacylglycerol cysteine attachment. A run of 5 helical transmembrane segments spans residues 33–53 (PYGV…TYFA), 58–78 (LGFG…ILPL), 135–155 (FGGI…AIFF), 180–200 (LTVI…QGVP), and 219–239 (VFMS…GGIF). Residues 262-310 (EYTKNPPKAYKSNNARKDVTSSTKTTESNQAIITSKKTNRNAGKQKRRG) are disordered. Residues 281–297 (TSSTKTTESNQAIITSK) are compositionally biased toward polar residues. The segment covering 298–310 (KTNRNAGKQKRRG) has biased composition (basic residues).

This sequence belongs to the OXA1/ALB3/YidC family. Type 2 subfamily.

It localises to the cell membrane. In terms of biological role, required for the insertion and/or proper folding and/or complex formation of integral membrane proteins into the membrane. Involved in integration of membrane proteins that insert both dependently and independently of the Sec translocase complex, as well as at least some lipoproteins. The chain is Membrane protein insertase YidC 2 from Streptococcus agalactiae serotype III (strain NEM316).